The chain runs to 667 residues: MKAIVFAYHDIGCVGLNALAEAGYDIQAVFTHTDNPGENRFFSSVARVAADLALPVFAPEDVNHPLWVERIRELQPDIIFSFYYRNMLSDEILSLAPQGGFNLHGSLLPQYRGRAPINWVLVNGETETGVTLHQMVKKADAGPIAGQYKVAISDVDTALTLHAKMRDAAQELLRNLLPRMKEGPLPLTPQKEADASYFGRRTAADGEIHWQKSAFTINNLVRAVTEPYPGAFSYLGQRKLTIWRSRPLDLVHNKLPGTVLSTAPLTVACGEGALEIITGQGEAGLYVQGDRLAQEMGIVTDVRLGNKPSNTLKRRTRVLILGVNGFIGNHLTERLLQDDRYEVYGLDIGSDAISRFLGNPAFHFVEGDISIHSEWIEYHIKKCDVILPLVAIATPIEYTRNPLRVFELDFEENLKIVRDCVKYNKRIVFPSTSEVYGMCDDKEFDEDTSRLIVGPINKQRWIYSVSKQLLDRVIWAYGVKEGLKFTLFRPFNWMGPRLDNLDAARIGSSRAITQLILNLVEGSPIKLVDGGAQKRCFTDIHDGIEALFRIIENRDGCCDGQIINIGNPTNEASIRELAEMLLTSFENHELRDHFPPFAGFKDIESSAYYGKGYQDVEYRTPSIKNARRILHWQPEIAMQQTVTETLDFFLRAAVIEKTAAPKDELNA.

The tract at residues 1–304 (MKAIVFAYHD…EMGIVTDVRL (304 aa)) is formyltransferase ArnAFT. The active-site Proton donor; for formyltransferase activity is the histidine 104. Residues arginine 114 and 136–140 (VKKAD) each bind (6R)-10-formyltetrahydrofolate. The segment at 314–667 (RRTRVLILGV…TAAPKDELNA (354 aa)) is dehydrogenase ArnADH. NAD(+) is bound by residues aspartate 347 and 368 to 369 (DI). Residues alanine 393, tyrosine 398, and 432–433 (TS) each bind UDP-alpha-D-glucuronate. The Proton acceptor; for decarboxylase activity role is filled by glutamate 434. UDP-alpha-D-glucuronate is bound by residues arginine 460, asparagine 492, 526–535 (KLVDGGAQKR), and tyrosine 613. Arginine 619 functions as the Proton donor; for decarboxylase activity in the catalytic mechanism.

In the N-terminal section; belongs to the Fmt family. UDP-L-Ara4N formyltransferase subfamily. The protein in the C-terminal section; belongs to the NAD(P)-dependent epimerase/dehydratase family. UDP-glucuronic acid decarboxylase subfamily. In terms of assembly, homohexamer, formed by a dimer of trimers.

It catalyses the reaction UDP-alpha-D-glucuronate + NAD(+) = UDP-beta-L-threo-pentopyranos-4-ulose + CO2 + NADH. The catalysed reaction is UDP-4-amino-4-deoxy-beta-L-arabinose + (6R)-10-formyltetrahydrofolate = UDP-4-deoxy-4-formamido-beta-L-arabinose + (6S)-5,6,7,8-tetrahydrofolate + H(+). Its pathway is nucleotide-sugar biosynthesis; UDP-4-deoxy-4-formamido-beta-L-arabinose biosynthesis; UDP-4-deoxy-4-formamido-beta-L-arabinose from UDP-alpha-D-glucuronate: step 1/3. The protein operates within nucleotide-sugar biosynthesis; UDP-4-deoxy-4-formamido-beta-L-arabinose biosynthesis; UDP-4-deoxy-4-formamido-beta-L-arabinose from UDP-alpha-D-glucuronate: step 3/3. It functions in the pathway bacterial outer membrane biogenesis; lipopolysaccharide biosynthesis. In terms of biological role, bifunctional enzyme that catalyzes the oxidative decarboxylation of UDP-glucuronic acid (UDP-GlcUA) to UDP-4-keto-arabinose (UDP-Ara4O) and the addition of a formyl group to UDP-4-amino-4-deoxy-L-arabinose (UDP-L-Ara4N) to form UDP-L-4-formamido-arabinose (UDP-L-Ara4FN). The modified arabinose is attached to lipid A and is required for resistance to polymyxin and cationic antimicrobial peptides. The sequence is that of Bifunctional polymyxin resistance protein ArnA from Yersinia pseudotuberculosis serotype IB (strain PB1/+).